An 87-amino-acid polypeptide reads, in one-letter code: Bombyxin B-10 (87 aa).

A signal peptide spans 1 to 19 (MKTILIFLVVISLMYSGEA). 3 disulfides stabilise this stretch: cysteine 27–cysteine 73, cysteine 39–cysteine 86, and cysteine 72–cysteine 77. A propeptide spans 46-64 (SGAQYAPYFWTRQYLGSRG) (bombyxin B-10 C peptide).

It belongs to the insulin family. As to quaternary structure, heterodimer of a B chain and an A chain linked by two disulfide bonds.

It localises to the secreted. In terms of biological role, brain peptide responsible for activation of prothoracic glands to produce ecdysone in insects. This is Bombyxin B-10 (BBXB10) from Bombyx mori (Silk moth).